A 208-amino-acid chain; its full sequence is Ribosome maturation factor RimP (208 aa).

The segment at 189-208 (EAPETGATTMARDGSEEETK) is disordered.

This sequence belongs to the RimP family.

The protein resides in the cytoplasm. Its function is as follows. Required for maturation of 30S ribosomal subunits. In Ruegeria pomeroyi (strain ATCC 700808 / DSM 15171 / DSS-3) (Silicibacter pomeroyi), this protein is Ribosome maturation factor RimP.